A 433-amino-acid chain; its full sequence is Phosphomethylpyrimidine synthase (433 aa).

Substrate-binding positions include Asn66, Met94, Tyr123, His162, Ser184 to Gly186, Asp225 to Arg228, and Glu264. Residue His268 participates in Zn(2+) binding. Tyr291 contacts substrate. Zn(2+) is bound at residue His332. Cys408, Cys411, and Cys415 together coordinate [4Fe-4S] cluster.

This sequence belongs to the ThiC family. [4Fe-4S] cluster is required as a cofactor.

It catalyses the reaction 5-amino-1-(5-phospho-beta-D-ribosyl)imidazole + S-adenosyl-L-methionine = 4-amino-2-methyl-5-(phosphooxymethyl)pyrimidine + CO + 5'-deoxyadenosine + formate + L-methionine + 3 H(+). The protein operates within cofactor biosynthesis; thiamine diphosphate biosynthesis. Functionally, catalyzes the synthesis of the hydroxymethylpyrimidine phosphate (HMP-P) moiety of thiamine from aminoimidazole ribotide (AIR) in a radical S-adenosyl-L-methionine (SAM)-dependent reaction. The sequence is that of Phosphomethylpyrimidine synthase from Saccharolobus islandicus (strain M.16.27) (Sulfolobus islandicus).